Reading from the N-terminus, the 338-residue chain is Acyl-CoA:acyl-CoA alkyltransferase (338 aa).

Residues His18 and Asp56 each contribute to the Mn(2+) site. Residue Glu97 is the Proton acceptor of the active site. The Acyl-thioester intermediate role is filled by Cys123.

It belongs to the thiolase-like superfamily. OleA family. In terms of assembly, homodimer. Weakly associates with the OleBCD complex.

The protein resides in the cytoplasm. It catalyses the reaction a 1,2-saturated acyl-CoA + an acyl-CoA + H2O = an (R)-2-alkyl-3-oxoalkanoate + 2 CoA + H(+). Inhibited by cerulenin. Functionally, involved in olefin biosynthesis. Catalyzes a non-decarboxylative head-to-head Claisen condensation of two acyl-CoA molecules, generating an (R)-2-alkyl-3-oxoalkanoate. Is active with fatty acyl-CoA substrates that ranged from C(8) to C(16) in length, and is the most active with palmitoyl-CoA and myristoyl-CoA. In Xanthomonas campestris pv. campestris (strain ATCC 33913 / DSM 3586 / NCPPB 528 / LMG 568 / P 25), this protein is Acyl-CoA:acyl-CoA alkyltransferase.